Reading from the N-terminus, the 432-residue chain is Tol-Pal system protein TolB (432 aa).

An N-terminal signal peptide occupies residues 1–24 (MKLVTRMWSILIVFFLAVLQPAQA).

The protein belongs to the TolB family. As to quaternary structure, the Tol-Pal system is composed of five core proteins: the inner membrane proteins TolA, TolQ and TolR, the periplasmic protein TolB and the outer membrane protein Pal. They form a network linking the inner and outer membranes and the peptidoglycan layer.

Its subcellular location is the periplasm. Part of the Tol-Pal system, which plays a role in outer membrane invagination during cell division and is important for maintaining outer membrane integrity. The sequence is that of Tol-Pal system protein TolB from Pasteurella multocida (strain Pm70).